The following is a 340-amino-acid chain: Ferrochelatase (340 aa).

2 residues coordinate Fe cation: His-189 and Glu-292.

Belongs to the ferrochelatase family.

It localises to the cytoplasm. The enzyme catalyses heme b + 2 H(+) = protoporphyrin IX + Fe(2+). It participates in porphyrin-containing compound metabolism; protoheme biosynthesis; protoheme from protoporphyrin-IX: step 1/1. Functionally, catalyzes the ferrous insertion into protoporphyrin IX. The chain is Ferrochelatase from Pseudomonas aeruginosa (strain LESB58).